A 211-amino-acid chain; its full sequence is dITP/XTP pyrophosphatase (211 aa).

Residue 7–12 (TSNKKK) participates in substrate binding. Positions 43 and 72 each coordinate Mg(2+). Catalysis depends on Asp72, which acts as the Proton acceptor. Substrate contacts are provided by residues Ser73, 169-172 (FGYD), Lys190, and 195-196 (HR).

Belongs to the HAM1 NTPase family. As to quaternary structure, homodimer. The cofactor is Mg(2+).

The enzyme catalyses XTP + H2O = XMP + diphosphate + H(+). It catalyses the reaction dITP + H2O = dIMP + diphosphate + H(+). The catalysed reaction is ITP + H2O = IMP + diphosphate + H(+). Functionally, pyrophosphatase that catalyzes the hydrolysis of nucleoside triphosphates to their monophosphate derivatives, with a high preference for the non-canonical purine nucleotides XTP (xanthosine triphosphate), dITP (deoxyinosine triphosphate) and ITP. Seems to function as a house-cleaning enzyme that removes non-canonical purine nucleotides from the nucleotide pool, thus preventing their incorporation into DNA/RNA and avoiding chromosomal lesions. This chain is dITP/XTP pyrophosphatase, found in Hydrogenobaculum sp. (strain Y04AAS1).